Consider the following 159-residue polypeptide: ATP synthase subunit b (159 aa).

Residues 8–28 (ILATIINFIILILILKHFFWD) form a helical membrane-spanning segment.

Belongs to the ATPase B chain family. F-type ATPases have 2 components, F(1) - the catalytic core - and F(0) - the membrane proton channel. F(1) has five subunits: alpha(3), beta(3), gamma(1), delta(1), epsilon(1). F(0) has three main subunits: a(1), b(2) and c(10-14). The alpha and beta chains form an alternating ring which encloses part of the gamma chain. F(1) is attached to F(0) by a central stalk formed by the gamma and epsilon chains, while a peripheral stalk is formed by the delta and b chains.

The protein resides in the cell membrane. Its function is as follows. F(1)F(0) ATP synthase produces ATP from ADP in the presence of a proton or sodium gradient. F-type ATPases consist of two structural domains, F(1) containing the extramembraneous catalytic core and F(0) containing the membrane proton channel, linked together by a central stalk and a peripheral stalk. During catalysis, ATP synthesis in the catalytic domain of F(1) is coupled via a rotary mechanism of the central stalk subunits to proton translocation. Component of the F(0) channel, it forms part of the peripheral stalk, linking F(1) to F(0). This Clostridium perfringens (strain ATCC 13124 / DSM 756 / JCM 1290 / NCIMB 6125 / NCTC 8237 / Type A) protein is ATP synthase subunit b.